The chain runs to 298 residues: Glutamyl-Q tRNA(Asp) synthetase (298 aa).

Residues 8–12 and glutamate 44 contribute to the L-glutamate site; that span reads RFAPS. Positions 11 to 21 match the 'HIGH' region motif; it reads PSPTGPLHFGS. Residues cysteine 100, cysteine 102, tyrosine 123, and cysteine 127 each contribute to the Zn(2+) site. The L-glutamate site is built by tyrosine 183 and arginine 201. Residues 239–243 carry the 'KMSKS' region motif; sequence KLSKQ. Lysine 242 is a binding site for ATP.

It belongs to the class-I aminoacyl-tRNA synthetase family. GluQ subfamily. Zn(2+) serves as cofactor.

In terms of biological role, catalyzes the tRNA-independent activation of glutamate in presence of ATP and the subsequent transfer of glutamate onto a tRNA(Asp). Glutamate is transferred on the 2-amino-5-(4,5-dihydroxy-2-cyclopenten-1-yl) moiety of the queuosine in the wobble position of the QUC anticodon. The protein is Glutamyl-Q tRNA(Asp) synthetase of Burkholderia cenocepacia (strain ATCC BAA-245 / DSM 16553 / LMG 16656 / NCTC 13227 / J2315 / CF5610) (Burkholderia cepacia (strain J2315)).